A 396-amino-acid polypeptide reads, in one-letter code: S-adenosylmethionine synthase (396 aa).

His-16 contributes to the ATP binding site. Asp-18 provides a ligand contact to Mg(2+). A K(+)-binding site is contributed by Glu-44. Residues Glu-57 and Gln-100 each coordinate L-methionine. The flexible loop stretch occupies residues Gln-100–Arg-110. ATP-binding positions include Asp-165–Lys-167, Asp-240, Arg-246–Lys-247, Ala-263, and Lys-267. Residue Asp-240 participates in L-methionine binding. Lys-271 contributes to the L-methionine binding site.

Belongs to the AdoMet synthase family. Homotetramer; dimer of dimers. Mg(2+) serves as cofactor. It depends on K(+) as a cofactor.

The protein resides in the cytoplasm. It catalyses the reaction L-methionine + ATP + H2O = S-adenosyl-L-methionine + phosphate + diphosphate. The protein operates within amino-acid biosynthesis; S-adenosyl-L-methionine biosynthesis; S-adenosyl-L-methionine from L-methionine: step 1/1. Functionally, catalyzes the formation of S-adenosylmethionine (AdoMet) from methionine and ATP. The overall synthetic reaction is composed of two sequential steps, AdoMet formation and the subsequent tripolyphosphate hydrolysis which occurs prior to release of AdoMet from the enzyme. The sequence is that of S-adenosylmethionine synthase from Pseudomonas syringae pv. syringae (strain B728a).